The sequence spans 675 residues: MPDREKAHARIEALREEIRHHNYLYYVLDRPEISDEAYDGLFRELVRLEESYPALITPDSPTQRVGAAPAEKFLPFPHTIPMLSLENAMSEAEVFEFARRVRKILGDRGDVDFMAEPKMDGLAVELVYENGELTGAGTRGDGYVGEDVTRNAKTIRAIPLKLYAGAGGASPPARIAVRGEVYMDRKDFAALNRSREQAGEPLFANPRNAAAGSLRQLDPSVTAARSLKAFFYGVGEVSGYRFKTQAQTLEQLRRWGLPVNPLSRVCPSIEDAVSFYNEIAAGRDALPFEIDGVVVKVNSIEWQEMLGEKSRSPRWAIAYKFSPHQARTRVLDIKVQVGRTGVLTPVAELEPVTVGGVTVRRATLHNQDEVERKDIRVRDQVMVRRAGDVIPEVVEVIGEARTGGEEVFQMPGQCPSCGSEVVRLPEEAVHRCLNRNCPAQIKASLRHFASRDAMNIEGLGKNIVSMLVDRGIVESVSDLYRLSVETLEQLPGFAGKSSRNLVESIERSKKTNLADFLYALGIYHVGSHVARLLAERFGTLDAVRRASVEELMSVNGVGEVVARSVVHYFSLPANRTLVESLLSAGLEMAATEPEAGPVDAFWNGKTVVFTGALSSMTRSNAAALTASRGARVSDSVSRKTDIVVAGADPGSKVEKARQLGITILDEREFLERLGM.

NAD(+)-binding positions include 35–39, 84–85, and glutamate 116; these read DEAYD and SL. The N6-AMP-lysine intermediate role is filled by lysine 118. NAD(+)-binding residues include arginine 139, glutamate 180, lysine 296, and lysine 320. Zn(2+)-binding residues include cysteine 414, cysteine 417, cysteine 432, and cysteine 437. Residues 597–675 form the BRCT domain; the sequence is PVDAFWNGKT…EREFLERLGM (79 aa).

The protein belongs to the NAD-dependent DNA ligase family. LigA subfamily. It depends on Mg(2+) as a cofactor. The cofactor is Mn(2+).

It catalyses the reaction NAD(+) + (deoxyribonucleotide)n-3'-hydroxyl + 5'-phospho-(deoxyribonucleotide)m = (deoxyribonucleotide)n+m + AMP + beta-nicotinamide D-nucleotide.. DNA ligase that catalyzes the formation of phosphodiester linkages between 5'-phosphoryl and 3'-hydroxyl groups in double-stranded DNA using NAD as a coenzyme and as the energy source for the reaction. It is essential for DNA replication and repair of damaged DNA. The sequence is that of DNA ligase from Syntrophobacter fumaroxidans (strain DSM 10017 / MPOB).